The sequence spans 243 residues: Cytochrome c1, heme protein (243 aa).

At Gly1–Lys201 the chain is on the mitochondrial intermembrane side. Positions His5–Asn194 constitute a Cytochrome c domain. Heme contacts are provided by Cys39, His40, and Met159. The chain crosses the membrane as a helical span at residues Leu202 to Tyr221. Over Asn222 to Lys243 the chain is Mitochondrial matrix.

It belongs to the cytochrome c family. Component of the ubiquinol-cytochrome c oxidoreductase (cytochrome b-c1 complex, complex III, CIII), a multisubunit enzyme composed of 3 respiratory subunits cytochrome b, cytochrome c1 and Rieske protein, 2 core protein subunits, and additional low-molecular weight protein subunits. The complex exists as an obligatory dimer and forms supercomplexes (SCs) in the inner mitochondrial membrane with cytochrome c oxidase (complex IV, CIV). Heme serves as cofactor.

The protein localises to the mitochondrion inner membrane. The enzyme catalyses a quinol + 2 Fe(III)-[cytochrome c](out) = a quinone + 2 Fe(II)-[cytochrome c](out) + 2 H(+)(out). Its function is as follows. Component of the ubiquinol-cytochrome c oxidoreductase, a multisubunit transmembrane complex that is part of the mitochondrial electron transport chain which drives oxidative phosphorylation. The respiratory chain contains 3 multisubunit complexes succinate dehydrogenase (complex II, CII), ubiquinol-cytochrome c oxidoreductase (cytochrome b-c1 complex, complex III, CIII) and cytochrome c oxidase (complex IV, CIV), that cooperate to transfer electrons derived from NADH and succinate to molecular oxygen, creating an electrochemical gradient over the inner membrane that drives transmembrane transport and the ATP synthase. The cytochrome b-c1 complex catalyzes electron transfer from ubiquinol to cytochrome c, linking this redox reaction to translocation of protons across the mitochondrial inner membrane, with protons being carried across the membrane as hydrogens on the quinol. In the process called Q cycle, 2 protons are consumed from the matrix, 4 protons are released into the intermembrane space and 2 electrons are passed to cytochrome c. Cytochrome c1 is a catalytic core subunit containing a c-type heme. It transfers electrons from the [2Fe-2S] iron-sulfur cluster of the Rieske protein to cytochrome c. The polypeptide is Cytochrome c1, heme protein (Euglena gracilis).